The chain runs to 178 residues: PRA1 family protein 2 (178 aa).

Residues 1-41 (MSEVRLPPLRALDDFVLGSARLVAPDPCDPQRWCHRVINNL) are Cytoplasmic-facing. A helical membrane pass occupies residues 42–62 (LYYQTNYLICFGLGLALAGYV). Residues 63-64 (RP) lie on the Extracellular side of the membrane. The chain crosses the membrane as a helical span at residues 65-85 (LHTLLSALVVAVALGMLVCAA). Over 86–96 (ENRAAVRRCRR) the chain is Cytoplasmic. The helical transmembrane segment at 97–119 (SHPAACLAAVLAVGFLVLWAAGG) threads the bilayer. The Extracellular portion of the chain corresponds to 120-122 (AGT). The helical transmembrane segment at 123–140 (FLLSIAGPVLLILVHASL) threads the bilayer. At 141-178 (RLRNLKNKIENKIESIGLKRTPMGLLLEALGQEQEAGS) the chain is on the cytoplasmic side.

It belongs to the PRA1 family. Interacts with CCR5 and GDE1.

Its subcellular location is the endosome membrane. In terms of biological role, may be involved in ER/Golgi transport and vesicular traffic. Plays a proapoptotic role in cerulenin-induced neuroblastoma apoptosis. The polypeptide is PRA1 family protein 2 (PRAF2) (Bos taurus (Bovine)).